Consider the following 174-residue polypeptide: Transcription antitermination protein NusB (174 aa).

It belongs to the NusB family.

Functionally, involved in transcription antitermination. Required for transcription of ribosomal RNA (rRNA) genes. Binds specifically to the boxA antiterminator sequence of the ribosomal RNA (rrn) operons. The sequence is that of Transcription antitermination protein NusB from Rhodopseudomonas palustris (strain ATCC BAA-98 / CGA009).